We begin with the raw amino-acid sequence, 327 residues long: MTAPCPPPPPDPQFVLRGTQSPVHALHFCEGAQAQGRPLLFSGSQSGLVHIWSLQTRRAVTTLDGHGGQCVTWLQTLPQGRQLLSQGRDLKLCLWDLAEGRSAVVDSVCLESVGFCRSSILAGGQPRWTLAVPGRGSDEVQILEMPSKTSVCALKPKADAKLGMPMCLRLWQADCSSRPLLLAGYEDGSVVLWDVSEQKVCSRIACHEEPVMDLDFDSQKARGISGSAGKALAVWSLDWQQALQVRGTHELTNPGIAEVTIRPDRKILATAGWDHRIRVFHWRTMQPLAVLAFHSAAVQCVAFTADGLLAAGSKDQRISLWSLYPRA.

WD repeat units follow at residues 16–54 (LRGT…IWSL), 58–97 (RAVT…LWDL), 103–145 (AVVD…ILEM), 153–195 (ALKP…LWDV), 200–237 (VCSR…VWSL), 242–282 (ALQV…VFHW), and 286–323 (QPLA…LWSL).

As to expression, ubiquitous. Highly expressed in heart, liver, skeletal muscle, kidney, spleen, thymus and pancreas. Detected at low levels in lung, placenta and brain.

It is found in the cytoplasm. The protein resides in the nucleus. Its function is as follows. Acts as a critical regulator of DNA damage response (DDR) signaling via specifically regulating phosphatidylinositol 3-kinase-related protein kinase (PIKK) family proteins. The protein is Guanine nucleotide-binding protein subunit beta-like protein 1 of Homo sapiens (Human).